The chain runs to 207 residues: Fibroblast growth factor 18 (207 aa).

Positions 1 to 27 (MYSAPSACTCLCLHFLLLCFQVQVLVA) are cleaved as a signal peptide. N-linked (GlcNAc...) asparagine glycosylation is present at Asn-39. A disulfide bridge connects residues Cys-109 and Cys-127. Asn-137 carries N-linked (GlcNAc...) asparagine glycosylation. Positions 157 to 186 (GRPRKGPKTRENQQDVHFMKRYPKGQPELQ) are disordered. Residues 164–174 (KTRENQQDVHF) are compositionally biased toward basic and acidic residues.

This sequence belongs to the heparin-binding growth factors family. In terms of assembly, interacts with FGFR3 and FGFR4.

It is found in the secreted. Its function is as follows. Plays an important role in the regulation of cell proliferation, cell differentiation and cell migration. Required for normal ossification and bone development. Stimulates hepatic and intestinal proliferation. The chain is Fibroblast growth factor 18 (FGF18) from Homo sapiens (Human).